A 113-amino-acid polypeptide reads, in one-letter code: UPF0482 protein KPN78578_15540 (113 aa).

The signal sequence occupies residues 1–28; sequence MNMTLNKRWCLTAILALSAVVYTSSSYA. The segment at 38-60 is disordered; it reads GDSAQSRQQASMEKEQWNDTRSL. The span at 39–48 shows a compositional bias: polar residues; that stretch reads DSAQSRQQAS. The segment covering 49–59 has biased composition (basic and acidic residues); sequence MEKEQWNDTRS.

It belongs to the UPF0482 family.

The protein is UPF0482 protein KPN78578_15540 of Klebsiella pneumoniae subsp. pneumoniae (strain ATCC 700721 / MGH 78578).